Here is a 188-residue protein sequence, read N- to C-terminus: MTASPCAFPVQFRQPSVSGLSQITSSLYISSGVAANNRLMLSSNRISTVINVSVEVVNALYEDIHYVQVPVADTPTSRLCDFFDPIADHIHSVEMKQGRTLLHCAAGVSRSAALCLAYLMKYHAMSLLDAHTWTKSCRPIIRPNNGFWEQLIHYEFQLFGRNTVHMVSSPVGMIPDIYEKEVRQMIPL.

The Tyrosine-protein phosphatase domain maps to 19-160; sequence GLSQITSSLY…LIHYEFQLFG (142 aa). The tract at residues 95–141 is sufficient for mitochondrial localization; the sequence is MKQGRTLLHCAAGVSRSAALCLAYLMKYHAMSLLDAHTWTKSCRPII. The Phosphocysteine intermediate role is filled by C104.

This sequence belongs to the protein-tyrosine phosphatase family. Non-receptor class dual specificity subfamily.

It localises to the cytoplasm. The protein localises to the nucleus. The protein resides in the mitochondrion inner membrane. It catalyses the reaction O-phospho-L-tyrosyl-[protein] + H2O = L-tyrosyl-[protein] + phosphate. The enzyme catalyses O-phospho-L-seryl-[protein] + H2O = L-seryl-[protein] + phosphate. It carries out the reaction O-phospho-L-threonyl-[protein] + H2O = L-threonyl-[protein] + phosphate. Can dephosphorylate single and diphosphorylated synthetic MAPK peptides, with preference for the phosphotyrosine and diphosphorylated forms over phosphothreonine. In vitro, dephosphorylates p-nitrophenyl phosphate (pNPP). The protein is Dual specificity protein phosphatase 18 (DUSP18) of Bos taurus (Bovine).